We begin with the raw amino-acid sequence, 119 residues long: uncharacterized protein (119 aa).

Transmembrane regions (helical) follow at residues 19-39 (FYPSFPFYLSFPFCPSFPSFL) and 68-88 (FPWFLPLLQLVYLCYKVPWLL).

It localises to the membrane. This is an uncharacterized protein from Saccharomyces cerevisiae (strain ATCC 204508 / S288c) (Baker's yeast).